The following is a 255-amino-acid chain: DNA repair protein RecO (255 aa).

This sequence belongs to the RecO family.

Functionally, involved in DNA repair and RecF pathway recombination. The polypeptide is DNA repair protein RecO (Listeria welshimeri serovar 6b (strain ATCC 35897 / DSM 20650 / CCUG 15529 / CIP 8149 / NCTC 11857 / SLCC 5334 / V8)).